An 843-amino-acid chain; its full sequence is MGFLSKILDGNNKEIKQLGKLADKVIALEEKTAILTDEEIRNKTKQFQTELADIDNVKKQNDYLDKILPEAYALVREGSKRVFNMTPYKVQIMGGIAIHKGDIAEMRTGEGKTLTATMPTYLNALAGRGVHVITVNEYLSSVQSEEMAELYNFLGLTVGLNLNSKTTEEKREAYAQDITYSTNNELGFDYLRDNMVNYSEDRVMRPLHFAIIDEVDSILIDEARTPLIISGEAEKSTSLYTQANVFAKMLKQDEDYKYDEKTKSVHLTEQGADKAERMFKVENLYDVQNVDVISHINTALRAHVTLQRDVDYMVVDGEVLIVDQFTGRTMPGRRFSEGLHQAIEAKEGVQIQNESKTMASITFQNYFRMYNKLAGMTGTAKTEEEEFRNIYNMTVTQIPTNKPVQRNDKSDLIYISQKGKFDAVVEDVVEKHKAGQPVLLGTVAVETSEYISNLLKKRGIRHDVLNAKNHEREAEIVAGAGQKGAVTIATNMAGRGTDIKLGEGVEELGGLAVIGTERHESRRIDDQLRGRSGRQGDKGDSRFYLSLQDELMIRFGSERLQKMMSRLGLDDSTPIESKMVSRAVESAQKRVEGNNFDARKRILEYDEVLRKQREIIYNERNSIIDEEDSSQVVDAMLRSTLQRSINYYINTADDEPEYQPFIDYINDIFLQEGDITEDDIKGKDAEDIFEVVWAKIEAAYQSQKDILEEQMNEFERMILLRSIDSHWTDHIDTMDQLRQGIHLRSYAQQNPLRDYQNEGHELFDIMMQNIEEDTCKFILKSVVQVEDNIEREKTTEFGEAKHVSAEDGKEKVKPKPIVKGDQVGRNDDCPCGSGKKFKNCHGK.

Residues Gln91, Gly109–Thr113, and Asp498 contribute to the ATP site. Basic and acidic residues predominate over residues Glu799–Lys813. Positions Glu799–Asn826 are disordered. Zn(2+)-binding residues include Cys829, Cys831, Cys840, and His841.

Belongs to the SecA family. In terms of assembly, monomer and homodimer. Part of the essential Sec protein translocation apparatus which comprises SecA, SecYEG and auxiliary proteins SecDF. Other proteins may also be involved. Requires Zn(2+) as cofactor.

The protein resides in the cell membrane. Its subcellular location is the cytoplasm. It carries out the reaction ATP + H2O + cellular proteinSide 1 = ADP + phosphate + cellular proteinSide 2.. Part of the Sec protein translocase complex. Interacts with the SecYEG preprotein conducting channel. Has a central role in coupling the hydrolysis of ATP to the transfer of proteins into and across the cell membrane, serving as an ATP-driven molecular motor driving the stepwise translocation of polypeptide chains across the membrane. In Staphylococcus aureus (strain MRSA252), this protein is Protein translocase subunit SecA 1.